Reading from the N-terminus, the 614-residue chain is Vitamin B12 transporter BtuB (614 aa).

The N-terminal stretch at 1 to 20 (MIKKASLLTACSVTAFSAWA) is a signal peptide. Positions 26–33 (DTLVVTAN) match the TonB box motif. Residues 38-152 (PRSTVLAPTT…IGGVVNIITT (115 aa)) form the TBDR plug domain. Cyanocob(III)alamin is bound by residues Leu83, Ser85, Asn92, and 110–111 (VS). Residues 155-614 (EPGTEISAGW…EYTLSGSYTF (460 aa)) form the TBDR beta-barrel domain. 3 beta stranded membrane-spanning segments follow: residues 158 to 165 (TEISAGWG), 169 to 178 (YQNYDVSTQQ), and 184 to 195 (TRVTLLGDYAHT). Positions 199, 211, 213, and 215 each coordinate Ca(2+). Transmembrane regions (beta stranded) follow at residues 217-227 (FLSKTLYGALE) and 232-248 (DAWS…NRTN). Ca(2+)-binding residues include Tyr249 and Asp250. Ala251 serves as a coordination point for cyanocob(III)alamin. Asp261 is a binding site for Ca(2+). 14 beta stranded membrane-spanning segments follow: residues 263–277 (RKLY…LRYN), 279–296 (ELIK…KDYN), 309–325 (TLDE…NNII), 328–337 (HGNVGAGVDW), 353–369 (YDQR…QQVG), 371–381 (FTFEGAARSDD), 385–400 (FGRH…WEFI), 403–417 (YRFI…KAPN), 434–443 (KSKQWEGAFE), 449–458 (VNWRISGYRN), 473–490 (YYNE…TANF), 494–509 (PLTH…ARNA), 517–529 (RRAK…QLDW), and 535–550 (DWGI…YDKD). Cyanocob(III)alamin is bound at residue Thr309. Arg517 lines the cyanocob(III)alamin pocket. Tyr551 is a binding site for cyanocob(III)alamin. The next 3 beta stranded transmembrane spans lie at 558–572 (TVKM…LAVA), 585–596 (IANLFDKDYETV), and 602–614 (AGRE…SYTF). Positions 597-614 (YGYQTAGREYTLSGSYTF) match the TonB C-terminal box motif.

This sequence belongs to the TonB-dependent receptor family. BtuB (TC 1.B.14.3.1) subfamily.

It is found in the cell outer membrane. In terms of biological role, involved in the active translocation of vitamin B12 (cyanocobalamin) across the outer membrane to the periplasmic space. It derives its energy for transport by interacting with the trans-periplasmic membrane protein TonB. The protein is Vitamin B12 transporter BtuB of Shigella dysenteriae serotype 1 (strain Sd197).